Here is a 189-residue protein sequence, read N- to C-terminus: Dynactin subunit 6 (189 aa).

Belongs to the dynactin subunits 5/6 family. Dynactin subunit 6 subfamily. In terms of assembly, subunit of dynactin, a multiprotein complex part of a tripartite complex with dynein and a adapter, such as BICDL1, BICD2 or HOOK3. The dynactin complex is built around ACTR1A/ACTB filament and consists of an actin-related filament composed of a shoulder domain, a pointed end and a barbed end.

It is found in the cytoplasm. Its subcellular location is the cytoskeleton. Functionally, part of the dynactin complex that activates the molecular motor dynein for ultra-processive transport along microtubules. The chain is Dynactin subunit 6 (dynF) from Dictyostelium discoideum (Social amoeba).